Consider the following 451-residue polypeptide: Serine--tRNA ligase (451 aa).

An L-serine-binding site is contributed by 247 to 249 (TAE). Residues 278–280 (RKE) and V294 each bind ATP. E301 is an L-serine binding site. 365–368 (ELAS) provides a ligand contact to ATP. T400 contributes to the L-serine binding site.

This sequence belongs to the class-II aminoacyl-tRNA synthetase family. Type-1 seryl-tRNA synthetase subfamily. In terms of assembly, homodimer. The tRNA molecule binds across the dimer.

The protein localises to the cytoplasm. The catalysed reaction is tRNA(Ser) + L-serine + ATP = L-seryl-tRNA(Ser) + AMP + diphosphate + H(+). It catalyses the reaction tRNA(Sec) + L-serine + ATP = L-seryl-tRNA(Sec) + AMP + diphosphate + H(+). The protein operates within aminoacyl-tRNA biosynthesis; selenocysteinyl-tRNA(Sec) biosynthesis; L-seryl-tRNA(Sec) from L-serine and tRNA(Sec): step 1/1. Catalyzes the attachment of serine to tRNA(Ser). Is also able to aminoacylate tRNA(Sec) with serine, to form the misacylated tRNA L-seryl-tRNA(Sec), which will be further converted into selenocysteinyl-tRNA(Sec). This Pyrobaculum aerophilum (strain ATCC 51768 / DSM 7523 / JCM 9630 / CIP 104966 / NBRC 100827 / IM2) protein is Serine--tRNA ligase.